A 538-amino-acid chain; its full sequence is Beta-1,4-mannosyl-glycoprotein 4-beta-N-acetylglucosaminyltransferase (538 aa).

At 1 to 7 the chain is on the cytoplasmic side; sequence MKMRRYK. Residues 8–23 traverse the membrane as a helical; Signal-anchor for type II membrane protein segment; the sequence is LFLMFCMAGLCLISFL. Residues 24–538 are Lumenal-facing; it reads HFFKTLSYVT…VRGKLDTTEG (515 aa). Residues 121-151 are disordered; it reads GTRMLEKPSPGRTEEKTKVAEGSSVRGPARR. N-linked (GlcNAc...) asparagine glycosylation is found at asparagine 245, asparagine 263, and asparagine 401. Residues 509–538 form a disordered region; sequence PKSTVEGGRRNQGSDGRSSAVRGKLDTTEG.

Belongs to the glycosyltransferase 17 family. Interacts with MGAT4D.

It localises to the golgi apparatus membrane. It catalyses the reaction N(4)-{beta-D-GlcNAc-(1-&gt;2)-alpha-D-Man-(1-&gt;3)-[beta-D-GlcNAc-(1-&gt;2)-alpha-D-Man-(1-&gt;6)]-beta-D-Man-(1-&gt;4)-beta-D-GlcNAc-(1-&gt;4)-beta-D-GlcNAc}-L-asparaginyl-[protein] + UDP-N-acetyl-alpha-D-glucosamine = N(4)-{beta-D-GlcNAc-(1-&gt;2)-alpha-D-Man-(1-&gt;3)-[beta-D-GlcNAc-(1-&gt;4)]-[beta-D-GlcNAc-(1-&gt;2)-alpha-D-Man-(1-&gt;6)]-beta-D-Man-(1-&gt;4)-beta-D-GlcNAc-(1-&gt;4)-beta-D-GlcNAc}-L-asparaginyl-[protein] + UDP + H(+). Its pathway is protein modification; protein glycosylation. It is involved in the regulation of the biosynthesis and biological function of glycoprotein oligosaccharides. Catalyzes the addition of N-acetylglucosamine in beta 1-4 linkage to the beta-linked mannose of the trimannosyl core of N-linked sugar chains, called bisecting N-acetylglucosamine (GlcNAc). It is one of the most important enzymes involved in the regulation of the biosynthesis of glycoprotein oligosaccharides. The addition of this bisecting GlcNAc residue alters not only the composition, but also the conformation of the N-glycan. The introduction of the bisecting GlcNAc residue results in the suppression of further processing and elongation of N-glycans, precluding the formation of beta-1,6 GlcNAc branching, catalyzed by MGAT5 since it is unable to use the bisected oligosaccharide as a substrate. Addition of bisecting N-acetylglucosamine to CDH1/E-cadherin modulates CDH1 cell membrane location. Inhibits NeuAc-alpha-2,3-Gal-beta-1,4-GlcNAc- formation which modulates sialylation levels and plays a role in cell migration regulation. In brain, addition of bisecting N-acetylglucosamine to BACE1 blocks its lysosomal targeting in response to oxidative stress and further degradation which increases its location to early endosome and the APP cleavage. This chain is Beta-1,4-mannosyl-glycoprotein 4-beta-N-acetylglucosaminyltransferase (Mgat3), found in Rattus norvegicus (Rat).